A 362-amino-acid polypeptide reads, in one-letter code: Transcription factor Sox-18 (362 aa).

The span at 1–13 (MHRPEPSYCREEP) shows a compositional bias: basic and acidic residues. The disordered stretch occupies residues 1–68 (MHRPEPSYCR…CEEKPGDPRI (68 aa)). Residues 37-51 (PSSPPAPDSPTPSPQ) show a composition bias toward pro residues. A compositionally biased stretch (basic and acidic residues) spans 59 to 68 (CEEKPGDPRI). Residues 68-136 (IRRPMNAFMV…QHLQDHPNYK (69 aa)) constitute a DNA-binding region (HMG box). 2 interaction with DNA regions span residues 70–83 (RPMN…KDER) and 94–106 (HNAV…GQSW). Residues 129–159 (LQDHPNYKYRPRRKKQAKKLKRVDPSPLLRN) are disordered. Residues 135–149 (YKYRPRRKKQAKKLK) show a composition bias toward basic residues. The segment at 149–209 (KRVDPSPLLR…VVEPSEPAFF (61 aa)) is important for transcriptional activation. The Sox C-terminal domain occupies 235–361 (KTLREISLPY…TAMYYTPCIT (127 aa)). A 9aaTAD motif is present at residues 307–315 (NEFDQYLNM).

The protein localises to the nucleus. In terms of biological role, transcription factor. Binds to the consensus DNA sequence 5'-AACAAT-3'. Also binds 5'-CACAAT-3' and 5'-AATAAT-3' but with a lower affinity. Acts partially redundantly with sox7 during cardiogenesis, acting indirectly through nodal-signaling to induce mesodermal, organizer and endodermal tissues, which then interact to initiate cardiogenesis. Also acts as an antagonist of beta-catenin signaling. In Xenopus tropicalis (Western clawed frog), this protein is Transcription factor Sox-18.